Consider the following 272-residue polypeptide: Indole-3-glycerol phosphate synthase (272 aa).

It belongs to the TrpC family.

It catalyses the reaction 1-(2-carboxyphenylamino)-1-deoxy-D-ribulose 5-phosphate + H(+) = (1S,2R)-1-C-(indol-3-yl)glycerol 3-phosphate + CO2 + H2O. Its pathway is amino-acid biosynthesis; L-tryptophan biosynthesis; L-tryptophan from chorismate: step 4/5. This chain is Indole-3-glycerol phosphate synthase, found in Mycolicibacterium vanbaalenii (strain DSM 7251 / JCM 13017 / BCRC 16820 / KCTC 9966 / NRRL B-24157 / PYR-1) (Mycobacterium vanbaalenii).